A 256-amino-acid polypeptide reads, in one-letter code: uncharacterized protein (256 aa).

The next 3 membrane-spanning stretches (helical) occupy residues 42 to 62 (LIAL…IWFF), 73 to 93 (FFTL…LIFL), and 108 to 128 (WLFL…WLIV).

Its subcellular location is the cell membrane. This is an uncharacterized protein from Mycoplasma genitalium (strain ATCC 33530 / DSM 19775 / NCTC 10195 / G37) (Mycoplasmoides genitalium).